A 153-amino-acid chain; its full sequence is uncharacterized protein (153 aa).

The segment at 1-88 (MDKDRPGLPA…VPPPQLDHPG (88 aa)) is disordered.

This is an uncharacterized protein from Epstein-Barr virus (strain P3HR-1) (HHV-4).